The chain runs to 298 residues: Fe(II)/2-oxoglutarate-dependent dioxygenase nvfF (298 aa).

Fe cation is bound by residues His137, Asp139, and His212.

The protein belongs to the PhyH family. In terms of assembly, homodimer. Fe cation serves as cofactor.

It catalyses the reaction fumigatonoid C + 2-oxoglutarate + O2 = novofumigatonin + succinate + CO2 + H2O. It participates in secondary metabolite biosynthesis; terpenoid biosynthesis. In terms of biological role, fe(II)/2-oxoglutarate-dependent dioxygenase; part of the gene cluster that mediates the biosynthesis of novofumigatonin, a heavily oxygenated meroterpenoid containing a unique orthoester moiety. The first step of the pathway is the synthesis of 3,5-dimethylorsellinic acid (DMOA) by the polyketide synthase nvfA via condensation of one acetyl-CoA starter unit with 3 malonyl-CoA units and 2 methylations. DMOA is then converted to farnesyl-DMOA by the farnesyltransferase nvfB. Epoxydation by FAD-dependent monooxygenase nvfK, followed by a protonation-initiated cyclization catalyzed by the terpene cyclase nvfL leads to the production of asnavolin H. The short chain dehydrogenase nvfC then as a 3-OH dehydrogenase of asnovolin H to yield chemesin D. There are two branches to synthesize asnovolin A from chemesin D. In one branch, chemesin D undergoes Baeyer-Villiger oxidation by nvfH, methylation by nvfJ, and enoyl reduction by the nvfM D enoylreductase that reduces the double bond between C-5'and C-6', to form respectively asnovolin I, asnovolin K, and asnovolin A. In the other branch, the methylation precedes the Baeyer-Villiger oxidation and the enoyl reduction to yield asnovolin A via the asnovolin J intermediate. Asnovolin A is further converted to fumigatonoid A by the Fe(II)/2-oxoglutarate-dependent dioxygenase nvfI that catalyzes an endoperoxidation reaction. The alpha/beta hydrolase nvfD then acts as an epimerase that converts fumigatonoid A to its C-5' epimer, which then undergoes spontaneous or nvfD-catalyzed lactonization. The following step utilizes the ketoreductase nvfG to produce fumigatonoid B. The dioxygenase nvfE further converts fumigatonoid B into fumigatonoid C. Finally the Fe(II)/2-oxoglutarate-dependent dioxygenase nvfF catalyzes two rounds of oxidation to transform fumigatonoid C into the end product, novofumigatonin A. The sequence is that of Fe(II)/2-oxoglutarate-dependent dioxygenase nvfF from Aspergillus novofumigatus (strain IBT 16806).